Here is a 512-residue protein sequence, read N- to C-terminus: Cobyric acid synthase (512 aa).

Positions 251-451 (ALDITVIRLP…IHGLFDSANF (201 aa)) constitute a GATase cobBQ-type domain. Cys-332 (nucleophile) is an active-site residue. His-443 is an active-site residue.

Belongs to the CobB/CobQ family. CobQ subfamily.

Its pathway is cofactor biosynthesis; adenosylcobalamin biosynthesis. Functionally, catalyzes amidations at positions B, D, E, and G on adenosylcobyrinic A,C-diamide. NH(2) groups are provided by glutamine, and one molecule of ATP is hydrogenolyzed for each amidation. This Photorhabdus laumondii subsp. laumondii (strain DSM 15139 / CIP 105565 / TT01) (Photorhabdus luminescens subsp. laumondii) protein is Cobyric acid synthase.